The primary structure comprises 264 residues: Apolipoprotein A-I (264 aa).

The N-terminal stretch at 1 to 18 is a signal peptide; it reads MKAVVLTVAVFFLTGSQA. 2 consecutive repeat copies span residues 67–88 and 89–110. The tract at residues 67–264 is 10 X approximate tandem repeats; it reads LKLLDNWDSL…DEATKKLTTQ (198 aa). Position 109 is a methionine sulfoxide (methionine 109). A 3; half-length repeat occupies 111–121; that stretch reads KDLEEVKLKVQ. Tandem repeats lie at residues 122 to 143, 144 to 165, and 166 to 187. The stretch at 188–207 is one 7; truncated repeat; sequence PYSDELRQRLAARLEALKES. Repeat 8 spans residues 208 to 229; the sequence is SSLADYQAKATEHLSALGEKAK. The stretch at 230–240 is one 9; half-length repeat; sequence PALEDLRQGLL. Copy 10 of the repeat occupies 241–264; sequence PVLENLKMSFWSAVDEATKKLTTQ.

This sequence belongs to the apolipoprotein A1/A4/E family. As to quaternary structure, homodimer. Interacts with APOA1BP and CLU. Component of a sperm activating protein complex (SPAP), consisting of APOA1, an immunoglobulin heavy chain, an immunoglobulin light chain and albumin. Interacts with NDRG1. Interacts with SCGB3A2. Interacts with NAXE and YJEFN3. In terms of processing, glycosylated. Palmitoylated. Post-translationally, phosphorylation sites are present in the extracellular medium.

The protein resides in the secreted. Functionally, participates in the reverse transport of cholesterol from tissues to the liver for excretion by promoting cholesterol efflux from tissues and by acting as a cofactor for the lecithin cholesterol acyltransferase (LCAT). As part of the SPAP complex, activates spermatozoa motility. This Marmota monax (Woodchuck) protein is Apolipoprotein A-I (ApoA1).